The chain runs to 781 residues: Dynamin-related protein dnm1 (781 aa).

The Dynamin-type G domain maps to 23–328 (FLDLPSIVVV…LVSHIRERLP (306 aa)). The tract at residues 33–40 (GSQSCGKS) is G1 motif. Position 33–40 (33–40 (GSQSCGKS)) interacts with GTP. Residues 59 to 61 (VTR) form a G2 motif region. The segment at 76-103 (KNNHDEESTSDNNSEETSAAGETGSLEG) is disordered. Positions 170 to 173 (DLPG) are G3 motif. GTP is bound by residues 170–174 (DLPGL) and 239–242 (TKLD). The segment at 239–242 (TKLD) is G4 motif. Residues 269 to 272 (VNRS) are G5 motif. In terms of domain architecture, GED spans 694-781 (VDLIKELITS…QANKIISTVF (88 aa)).

The protein belongs to the TRAFAC class dynamin-like GTPase superfamily. Dynamin/Fzo/YdjA family.

The protein resides in the cytoplasm. Its subcellular location is the mitochondrion outer membrane. It catalyses the reaction GTP + H2O = GDP + phosphate + H(+). Microtubule-associated force-producing protein that mediates mitochondrial fission during interphasic growth and at cell division. Fission of mitochondria occurs in many cell types and constitutes an important step in mitochondria morphology, which is balanced between fusion and fission. With vps1, acts redundantly in peroxisome biogenesis, which is under cell cycle control. The sequence is that of Dynamin-related protein dnm1 (dnm1) from Schizosaccharomyces pombe (strain 972 / ATCC 24843) (Fission yeast).